Here is a 1604-residue protein sequence, read N- to C-terminus: Transposon Ty1-DR4 Gag-Pol polyprotein (1604 aa).

Composition is skewed to polar residues over residues M1–S23, T48–S60, and Q127–F152. 3 disordered regions span residues M1–Q93, P126–M174, and G352–T421. Over residues T153 to T165 the composition is skewed to low complexity. The interval N299–H401 is RNA-binding. The span at N402–S418 shows a compositional bias: low complexity. Residue S416 is modified to Phosphoserine. Catalysis depends on D461, which acts as the For protease activity; shared with dimeric partner. The interval N583–C640 is integrase-type zinc finger-like. In terms of domain architecture, Integrase catalytic spans N660–P835. Mg(2+) is bound by residues D671 and D736. 3 disordered regions span residues S956–K1087, R1092–P1111, and D1130–T1187. Residues S960–T969 are compositionally biased toward low complexity. The segment covering S1005–T1015 has biased composition (polar residues). The segment covering E1038–S1053 has biased composition (basic and acidic residues). 2 stretches are compositionally biased toward polar residues: residues Y1054–D1082 and P1101–P1111. The short motif at K1178 to R1212 is the Bipartite nuclear localization signal element. The Reverse transcriptase Ty1/copia-type domain maps to N1338–Q1476. Positions 1346, 1427, and 1428 each coordinate Mg(2+).

In terms of assembly, the capsid protein forms a homotrimer, from which the VLPs are assembled. The protease is a homodimer, whose active site consists of two apposed aspartic acid residues. Post-translationally, initially, virus-like particles (VLPs) are composed of the structural unprocessed proteins Gag and Gag-Pol, and also contain the host initiator methionine tRNA (tRNA(i)-Met) which serves as a primer for minus-strand DNA synthesis, and a dimer of genomic Ty RNA. Processing of the polyproteins occurs within the particle and proceeds by an ordered pathway, called maturation. First, the protease (PR) is released by autocatalytic cleavage of the Gag-Pol polyprotein yielding capsid protein p45 and a Pol-p154 precursor protein. This cleavage is a prerequisite for subsequent processing of Pol-p154 at the remaining sites to release the mature structural and catalytic proteins. Maturation takes place prior to the RT reaction and is required to produce transposition-competent VLPs.

The protein localises to the cytoplasm. Its subcellular location is the nucleus. It catalyses the reaction DNA(n) + a 2'-deoxyribonucleoside 5'-triphosphate = DNA(n+1) + diphosphate. The catalysed reaction is Endonucleolytic cleavage to 5'-phosphomonoester.. In terms of biological role, capsid protein (CA) is the structural component of the virus-like particle (VLP), forming the shell that encapsulates the retrotransposons dimeric RNA genome. The particles are assembled from trimer-clustered units and there are holes in the capsid shells that allow for the diffusion of macromolecules. CA also has nucleocapsid-like chaperone activity, promoting primer tRNA(i)-Met annealing to the multipartite primer-binding site (PBS), dimerization of Ty1 RNA and initiation of reverse transcription. Functionally, the aspartyl protease (PR) mediates the proteolytic cleavages of the Gag and Gag-Pol polyproteins after assembly of the VLP. Its function is as follows. Reverse transcriptase/ribonuclease H (RT) is a multifunctional enzyme that catalyzes the conversion of the retro-elements RNA genome into dsDNA within the VLP. The enzyme displays a DNA polymerase activity that can copy either DNA or RNA templates, and a ribonuclease H (RNase H) activity that cleaves the RNA strand of RNA-DNA heteroduplexes during plus-strand synthesis and hydrolyzes RNA primers. The conversion leads to a linear dsDNA copy of the retrotransposon that includes long terminal repeats (LTRs) at both ends. Integrase (IN) targets the VLP to the nucleus, where a subparticle preintegration complex (PIC) containing at least integrase and the newly synthesized dsDNA copy of the retrotransposon must transit the nuclear membrane. Once in the nucleus, integrase performs the integration of the dsDNA into the host genome. The chain is Transposon Ty1-DR4 Gag-Pol polyprotein (TY1B-DR4) from Saccharomyces cerevisiae (strain ATCC 204508 / S288c) (Baker's yeast).